A 349-amino-acid chain; its full sequence is Ion-translocating oxidoreductase complex subunit D (349 aa).

The next 3 membrane-spanning stretches (helical) occupy residues 36–56, 77–99, and 124–144; these read CAFF…VALS, SAML…WMIV, and AMAA…TWIA. FMN phosphoryl threonine is present on threonine 185. 5 helical membrane-spanning segments follow: residues 212-232, 239-259, 265-285, 291-311, and 315-335; these read STGV…IVLL, WHIS…GFLL, ASPL…FIAT, ATSP…VYII, and GGYP…APFI.

Belongs to the NqrB/RnfD family. The complex is composed of six subunits: RnfA, RnfB, RnfC, RnfD, RnfE and RnfG. The cofactor is FMN.

It is found in the cell inner membrane. Part of a membrane-bound complex that couples electron transfer with translocation of ions across the membrane. The protein is Ion-translocating oxidoreductase complex subunit D of Shewanella oneidensis (strain ATCC 700550 / JCM 31522 / CIP 106686 / LMG 19005 / NCIMB 14063 / MR-1).